A 263-amino-acid polypeptide reads, in one-letter code: 3-methyl-2-oxobutanoate hydroxymethyltransferase (263 aa).

Residues Asp45 and Asp84 each contribute to the Mg(2+) site. Residues 45–46, Asp84, and Lys112 contribute to the 3-methyl-2-oxobutanoate site; that span reads DS. Glu114 contributes to the Mg(2+) binding site. Residue Glu180 is the Proton acceptor of the active site.

It belongs to the PanB family. Homodecamer; pentamer of dimers. Mg(2+) is required as a cofactor.

It is found in the cytoplasm. It catalyses the reaction 3-methyl-2-oxobutanoate + (6R)-5,10-methylene-5,6,7,8-tetrahydrofolate + H2O = 2-dehydropantoate + (6S)-5,6,7,8-tetrahydrofolate. The protein operates within cofactor biosynthesis; (R)-pantothenate biosynthesis; (R)-pantoate from 3-methyl-2-oxobutanoate: step 1/2. Catalyzes the reversible reaction in which hydroxymethyl group from 5,10-methylenetetrahydrofolate is transferred onto alpha-ketoisovalerate to form ketopantoate. The protein is 3-methyl-2-oxobutanoate hydroxymethyltransferase of Citrobacter koseri (strain ATCC BAA-895 / CDC 4225-83 / SGSC4696).